A 210-amino-acid chain; its full sequence is Na(+)-translocating NADH-quinone reductase subunit D (210 aa).

The next 5 helical transmembrane spans lie at 42–62 (FVMT…VSLI), 72–92 (IIVQ…VLKA), 103–123 (VFVS…AFAM), 131–151 (FIDG…VAFF), and 178–198 (NGLM…IWAI).

This sequence belongs to the NqrDE/RnfAE family. As to quaternary structure, composed of six subunits; NqrA, NqrB, NqrC, NqrD, NqrE and NqrF.

It is found in the cell inner membrane. The catalysed reaction is a ubiquinone + n Na(+)(in) + NADH + H(+) = a ubiquinol + n Na(+)(out) + NAD(+). In terms of biological role, NQR complex catalyzes the reduction of ubiquinone-1 to ubiquinol by two successive reactions, coupled with the transport of Na(+) ions from the cytoplasm to the periplasm. NqrA to NqrE are probably involved in the second step, the conversion of ubisemiquinone to ubiquinol. The protein is Na(+)-translocating NADH-quinone reductase subunit D of Aliivibrio fischeri (strain ATCC 700601 / ES114) (Vibrio fischeri).